Consider the following 407-residue polypeptide: Transcriptional regulator ICP22 homolog (407 aa).

The tract at residues 34–268 is disordered; that stretch reads RKRRRKLKPQ…STQPGGVPKL (235 aa). Acidic residues predominate over residues 81-241; the sequence is EREGEGGEEG…EEAEEEEEEA (161 aa).

The protein belongs to the herpesviridae ICP22 family.

This Saimiriine herpesvirus 2 (strain 11) (SaHV-2) protein is Transcriptional regulator ICP22 homolog (73).